The sequence spans 736 residues: Segment polarity protein dishevelled homolog DVL-2 (736 aa).

Residues 1-82 (MAETKVIYHL…RVVSWLASSE (82 aa)) form the DIX domain. Residues 79 to 241 (ASSEGSQPDS…PRLERTSSFS (163 aa)) form a disordered region. Over residues 100–114 (EPPPPVPPPIPPPPA) the composition is skewed to pro residues. The span at 149 to 160 (MRRDRVRRRESS) shows a compositional bias: basic and acidic residues. The span at 181–195 (ESSSTLLTSEIETSI) shows a compositional bias: low complexity. The segment covering 205 to 217 (SRFSSSTEQSSAS) has biased composition (polar residues). A compositionally biased stretch (basic residues) spans 219–231 (LLKRHRRRRKQRP). The region spanning 254–326 (TVTLNMEKYN…NDDAVRVLRD (73 aa)) is the PDZ domain. The tract at residues 327–427 (IVHKPGPIVL…LASVVKVMAS (101 aa)) is interaction with custos. In terms of domain architecture, DEP spans 428–502 (PESGLEVRDR…SEQCYYIFGD (75 aa)). Composition is skewed to low complexity over residues 574–593 (MGSA…SNRS) and 616–629 (KSGS…STRS). The segment at 574 to 664 (MGSAGSQHSE…HPPSVHSYAA (91 aa)) is disordered.

It belongs to the DSH family. In terms of assembly, can form homomultimers. Interacts with prickle1. Interacts (via PDZ domain) with ccdc88c/dal and dact1-B/dpr. Interacts (via DIX domain) with ARP/Axin-related protein and dact1-A/frodo. Interacts with sdc4, possibly via fz7. Interacts directly (via DEP domain) with efnb1/ephrin-B1 and indirectly with the phosphorylated ephrin receptors ephb1 and ephb2, via association with SH domain-containing adapters. May interact with lrrc6. Interacts with custos (via NLS1 and NLS2); the interaction is negatively regulated by Wnt stimulation. Post-translationally, phosphorylated. Phosphorylation is controlled by frizzled proteins, correlates with the onset of embryo dorsalizing events and is higher in the dorsal half of early cleavage embryos. Phosphorylated on tyrosine residues in response to association with efnb1/ephrin-B1. Expressed equally in both animal-vegetal and dorsal-ventral directions of the early blastula. Becomes enriched on the dorsal side of the embryo after cortical rotation. Expressed along the anterior margin of eye field of neurulae (stage 16 embryos) and in the anterolateral crescent that borders the eye field. Continues to be expressed in the optic cup at stage 26. Expressed in the central nervous system throughout the early tailbud stage including the entire hindbrain.

Its subcellular location is the cytoplasm. The protein resides in the cytoplasmic vesicle. It is found in the cell projection. The protein localises to the cilium. It localises to the nucleus. Its subcellular location is the cell membrane. In terms of biological role, involved in at least 2 independent signaling cascades, controlling cell fate via canonical Wnt signaling and cell polarity via a planar cell polarity (PCP) cascade. Acts synergistically with dal/dapple-like to activate Wnt signaling, stabilizing ctnnb1/beta-catenin and leading to dorsal axis formation. Also prevents degradation of ctnnb1/beta-catenin by displacing gsk3 from a complex with ARP/Axin-related protein. Has an additional role in anterior-posterior (A/P) axis formation, specifying different neuroectodermal cell fates along the A/P axis in a dose-dependent manner by activating several early patterning genes. In the PCP pathway, required at the cell membrane for PCP-mediated neural and mesodermal convergent extension during gastrulation and subsequent neural tube closure, acting to activate jnk. Also involved in blastopore closure and archenteron elongation during early, but not late, gastrulation. Associates with ephrin receptors and ligands and acts as part of a downstream PCP pathway to mediate ephrin-mediated cell repulsion via activation of rhoa. Required for efnb1/ephrin-B1-driven movement of non-retinal progenitor cells into the retina during eye field formation. Patterns the hindbrain. Required for ciliogenesis. Controls the docking of basal bodies to the apical plasma membrane; mediates the activation, but not localization of rhoa at the apical surface of ciliated cells during basal body docking. Furthermore, required for the association of basal bodies with membrane-bound vesicles and the vesicle-trafficking protein exoc4/sec8, and this association is in turn required for basal body docking. Once basal bodies are docked, required for the planar polarization of basal bodies that underlies ciliary beating and the directional fluid flow across ciliated epithelia. The polypeptide is Segment polarity protein dishevelled homolog DVL-2 (dvl2) (Xenopus laevis (African clawed frog)).